A 376-amino-acid polypeptide reads, in one-letter code: Endo-1,4-beta-xylanase A (376 aa).

An N-terminal signal peptide occupies residues 1-18; sequence MHLASSLFLLATLPFGFA. Positions 55 to 355 constitute a GH10 domain; it reads QRERAGLEDK…HPAYYGVVEA (301 aa). A glycan (N-linked (GlcNAc...) asparagine) is linked at asparagine 100. Glutamate 170 (proton donor) is an active-site residue. Glutamate 277 acts as the Nucleophile in catalysis. Asparagine 358 carries N-linked (GlcNAc...) asparagine glycosylation.

The protein belongs to the glycosyl hydrolase 10 (cellulase F) family.

It localises to the secreted. The catalysed reaction is Endohydrolysis of (1-&gt;4)-beta-D-xylosidic linkages in xylans.. It participates in glycan degradation; xylan degradation. Its activity is regulated as follows. Partial inhibition of activity is detected in the presence of Ag(+), Cu2(+) and SDS. Like most fungal xylanases, activity is completely inhibited by Hg(2+) since Hg(2+) could interact with tryptophan residues and oxidize the indole ring. Beta-mercaptoethanol enhances the enzymatic activity by counteracting the oxidation effects of the S-S linkage between cysteine residues. In terms of biological role, endo-1,4-beta-xylanase involved in the hydrolysis of xylan, a major structural heterogeneous polysaccharide found in plant biomass representing the second most abundant polysaccharide in the biosphere, after cellulose. Is most active on birchwood xylan (defined as 100%), moderate on beechwood xylan (96.8%) and soluble wheat arabinoxylan (84.5%), and weak on insoluble wheat arabinoxylan (19.7%). Hydrolyzes substrates into a mixture of xylobiose and xylotriose, but no xylose. No activity was detected in the presence of barley beta-glucan, carboxymethyl cellulose-sodium (CMC-Na), and Avicel. Acts as an alkali-tolerant xylanase, exhibiting 68.8% of the activity at pH 9.0, and even 31.8% at pH 10.0. The protein is Endo-1,4-beta-xylanase A of Humicola insolens (Soft-rot fungus).